Consider the following 155-residue polypeptide: MSEQNNTEMTFQIQRIYTKDISFEAPNAPHVFQKDWQPEVKLDLDTASTQLADDVYEVVLRVTVTASLGEETAFLCEVQQGGIFSIAGIEGTQMAHCLGAYCPNILFPYARECITSMVSRGTFPQLNLAPVNFDALFMNYLQQQAGEGTEEHQDA.

Belongs to the SecB family. In terms of assembly, homotetramer, a dimer of dimers. One homotetramer interacts with 1 SecA dimer.

It is found in the cytoplasm. Its function is as follows. One of the proteins required for the normal export of preproteins out of the cell cytoplasm. It is a molecular chaperone that binds to a subset of precursor proteins, maintaining them in a translocation-competent state. It also specifically binds to its receptor SecA. This Escherichia coli O127:H6 (strain E2348/69 / EPEC) protein is Protein-export protein SecB.